We begin with the raw amino-acid sequence, 198 residues long: Ribonuclease HII (198 aa).

Residues 6 to 195 (RRVAGVDEVG…VHHMLYQDKN (190 aa)) enclose the RNase H type-2 domain. A divalent metal cation-binding residues include Asp12, Glu13, and Asp103.

This sequence belongs to the RNase HII family. Mn(2+) serves as cofactor. Mg(2+) is required as a cofactor.

The protein localises to the cytoplasm. The enzyme catalyses Endonucleolytic cleavage to 5'-phosphomonoester.. Functionally, endonuclease that specifically degrades the RNA of RNA-DNA hybrids. In Roseobacter denitrificans (strain ATCC 33942 / OCh 114) (Erythrobacter sp. (strain OCh 114)), this protein is Ribonuclease HII.